The chain runs to 357 residues: Dual-specificity RNA methyltransferase RlmN (357 aa).

The active-site Proton acceptor is the E89. In terms of domain architecture, Radical SAM core spans 109-340; sequence EGEKYTVCVS…CTIRESKALD (232 aa). C116 and C345 form a disulfide bridge. C123, C127, and C130 together coordinate [4Fe-4S] cluster. S-adenosyl-L-methionine is bound by residues 173 to 174, S203, 226 to 228, and N302; these read GE and SLH. Catalysis depends on C345, which acts as the S-methylcysteine intermediate.

It belongs to the radical SAM superfamily. RlmN family. [4Fe-4S] cluster is required as a cofactor.

It is found in the cytoplasm. It catalyses the reaction adenosine(2503) in 23S rRNA + 2 reduced [2Fe-2S]-[ferredoxin] + 2 S-adenosyl-L-methionine = 2-methyladenosine(2503) in 23S rRNA + 5'-deoxyadenosine + L-methionine + 2 oxidized [2Fe-2S]-[ferredoxin] + S-adenosyl-L-homocysteine. The catalysed reaction is adenosine(37) in tRNA + 2 reduced [2Fe-2S]-[ferredoxin] + 2 S-adenosyl-L-methionine = 2-methyladenosine(37) in tRNA + 5'-deoxyadenosine + L-methionine + 2 oxidized [2Fe-2S]-[ferredoxin] + S-adenosyl-L-homocysteine. Its function is as follows. Specifically methylates position 2 of adenine 2503 in 23S rRNA and position 2 of adenine 37 in tRNAs. m2A2503 modification seems to play a crucial role in the proofreading step occurring at the peptidyl transferase center and thus would serve to optimize ribosomal fidelity. This is Dual-specificity RNA methyltransferase RlmN from Helicobacter pylori (strain HPAG1).